Here is a 253-residue protein sequence, read N- to C-terminus: MQRTIIAANWKMNKNFQEGLQLAKEITQFIQAEPLAGAQIILFPSFIHLEGISKLLTPEVKLHLGAQNCHDQIAGAFTGEVSAAMLASIDVRYVLVGHSERRQNFAEDNDLIAKKIDAILSCKLQPVFCCGEPLSVRESNQHYAFIEQQIAESLFHLTPDELQQVIIAYEPIWAIGTGLIPSLAEIEEMQQTIRNILKKQYNTVLADNMAILYGGSCNASNITKLISLPGINGVLIGGASLHFKEFIHILRSL.

A substrate-binding site is contributed by 9 to 11; it reads NWK. The Electrophile role is filled by H98. Residue E170 is the Proton acceptor of the active site. Residues G176, S216, and 237–238 each bind substrate; that span reads GG.

It belongs to the triosephosphate isomerase family. In terms of assembly, homodimer.

Its subcellular location is the cytoplasm. It catalyses the reaction D-glyceraldehyde 3-phosphate = dihydroxyacetone phosphate. Its pathway is carbohydrate biosynthesis; gluconeogenesis. It participates in carbohydrate degradation; glycolysis; D-glyceraldehyde 3-phosphate from glycerone phosphate: step 1/1. Involved in the gluconeogenesis. Catalyzes stereospecifically the conversion of dihydroxyacetone phosphate (DHAP) to D-glyceraldehyde-3-phosphate (G3P). The polypeptide is Triosephosphate isomerase (Amoebophilus asiaticus (strain 5a2)).